We begin with the raw amino-acid sequence, 122 residues long: Large ribosomal subunit protein uL14 (122 aa).

It belongs to the universal ribosomal protein uL14 family. In terms of assembly, part of the 50S ribosomal subunit. Forms a cluster with proteins L3 and L19. In the 70S ribosome, L14 and L19 interact and together make contacts with the 16S rRNA in bridges B5 and B8.

Binds to 23S rRNA. Forms part of two intersubunit bridges in the 70S ribosome. This is Large ribosomal subunit protein uL14 from Clostridioides difficile (strain 630) (Peptoclostridium difficile).